The sequence spans 633 residues: Threonine--tRNA ligase (633 aa).

The region spanning 1–59 is the TGS domain; it reads MIKVTFLAEQKVKEYSGRVTGFDILQPDALREAIAFKVNGELYDLSREIESDTEIEVIQ. The interval 240–532 is catalytic; the sequence is DHRKIAKDMD…LIENYAGKFP (293 aa). Zn(2+) contacts are provided by Cys-332, His-383, and His-509.

Belongs to the class-II aminoacyl-tRNA synthetase family. Homodimer. The cofactor is Zn(2+).

The protein localises to the cytoplasm. It carries out the reaction tRNA(Thr) + L-threonine + ATP = L-threonyl-tRNA(Thr) + AMP + diphosphate + H(+). Catalyzes the attachment of threonine to tRNA(Thr) in a two-step reaction: L-threonine is first activated by ATP to form Thr-AMP and then transferred to the acceptor end of tRNA(Thr). Also edits incorrectly charged L-seryl-tRNA(Thr). The chain is Threonine--tRNA ligase from Wolbachia pipientis subsp. Culex pipiens (strain wPip).